A 336-amino-acid polypeptide reads, in one-letter code: Aspartate--ammonia ligase (336 aa).

It belongs to the class-II aminoacyl-tRNA synthetase family. AsnA subfamily.

It localises to the cytoplasm. The catalysed reaction is L-aspartate + NH4(+) + ATP = L-asparagine + AMP + diphosphate + H(+). It participates in amino-acid biosynthesis; L-asparagine biosynthesis; L-asparagine from L-aspartate (ammonia route): step 1/1. This Limosilactobacillus fermentum (strain NBRC 3956 / LMG 18251) (Lactobacillus fermentum) protein is Aspartate--ammonia ligase.